A 391-amino-acid chain; its full sequence is Chorismate synthase (391 aa).

Residue Arg48 participates in NADP(+) binding. FMN is bound by residues Arg126–Ser128, Gly286, Lys301–Ser305, and Arg328.

The protein belongs to the chorismate synthase family. The cofactor is FMNH2.

The catalysed reaction is 5-O-(1-carboxyvinyl)-3-phosphoshikimate = chorismate + phosphate. It participates in metabolic intermediate biosynthesis; chorismate biosynthesis; chorismate from D-erythrose 4-phosphate and phosphoenolpyruvate: step 7/7. Catalyzes the anti-1,4-elimination of the C-3 phosphate and the C-6 proR hydrogen from 5-enolpyruvylshikimate-3-phosphate (EPSP) to yield chorismate, which is the branch point compound that serves as the starting substrate for the three terminal pathways of aromatic amino acid biosynthesis. This reaction introduces a second double bond into the aromatic ring system. The polypeptide is Chorismate synthase (Saccharolobus islandicus (strain L.S.2.15 / Lassen #1) (Sulfolobus islandicus)).